A 128-amino-acid chain; its full sequence is Large ribosomal subunit protein eL31 (128 aa).

It belongs to the eukaryotic ribosomal protein eL31 family.

The protein is Large ribosomal subunit protein eL31 (RpL31) of Drosophila virilis (Fruit fly).